Reading from the N-terminus, the 66-residue chain is Large ribosomal subunit protein bL31 (66 aa).

4 residues coordinate Zn(2+): Cys16, Cys18, Cys36, and Cys39.

It belongs to the bacterial ribosomal protein bL31 family. Type A subfamily. As to quaternary structure, part of the 50S ribosomal subunit. Zn(2+) is required as a cofactor.

Functionally, binds the 23S rRNA. This is Large ribosomal subunit protein bL31 from Bacillus licheniformis (strain ATCC 14580 / DSM 13 / JCM 2505 / CCUG 7422 / NBRC 12200 / NCIMB 9375 / NCTC 10341 / NRRL NRS-1264 / Gibson 46).